A 493-amino-acid polypeptide reads, in one-letter code: Ketol-acid reductoisomerase (NADP(+)) (493 aa).

In terms of domain architecture, KARI N-terminal Rossmann spans 15 to 208; it reads AQLGKCRFMQ…GGDRAGVLES (194 aa). NADP(+)-binding positions include 45 to 48, R68, R76, S78, and 108 to 110; these read CGAQ and DKQ. The active site involves H132. G158 contacts NADP(+). 2 KARI C-terminal knotted domains span residues 209-344 and 345-486; these read SFVA…NAPA and FAGK…MKDM. D217, E221, E389, and E393 together coordinate Mg(2+). S414 is a substrate binding site.

It belongs to the ketol-acid reductoisomerase family. Mg(2+) serves as cofactor.

It catalyses the reaction (2R)-2,3-dihydroxy-3-methylbutanoate + NADP(+) = (2S)-2-acetolactate + NADPH + H(+). It carries out the reaction (2R,3R)-2,3-dihydroxy-3-methylpentanoate + NADP(+) = (S)-2-ethyl-2-hydroxy-3-oxobutanoate + NADPH + H(+). It participates in amino-acid biosynthesis; L-isoleucine biosynthesis; L-isoleucine from 2-oxobutanoate: step 2/4. It functions in the pathway amino-acid biosynthesis; L-valine biosynthesis; L-valine from pyruvate: step 2/4. Its function is as follows. Involved in the biosynthesis of branched-chain amino acids (BCAA). Catalyzes an alkyl-migration followed by a ketol-acid reduction of (S)-2-acetolactate (S2AL) to yield (R)-2,3-dihydroxy-isovalerate. In the isomerase reaction, S2AL is rearranged via a Mg-dependent methyl migration to produce 3-hydroxy-3-methyl-2-ketobutyrate (HMKB). In the reductase reaction, this 2-ketoacid undergoes a metal-dependent reduction by NADPH to yield (R)-2,3-dihydroxy-isovalerate. In Aeromonas hydrophila subsp. hydrophila (strain ATCC 7966 / DSM 30187 / BCRC 13018 / CCUG 14551 / JCM 1027 / KCTC 2358 / NCIMB 9240 / NCTC 8049), this protein is Ketol-acid reductoisomerase (NADP(+)).